A 226-amino-acid chain; its full sequence is 2-C-methyl-D-erythritol 4-phosphate cytidylyltransferase (226 aa).

The protein belongs to the IspD/TarI cytidylyltransferase family. IspD subfamily.

The enzyme catalyses 2-C-methyl-D-erythritol 4-phosphate + CTP + H(+) = 4-CDP-2-C-methyl-D-erythritol + diphosphate. It participates in isoprenoid biosynthesis; isopentenyl diphosphate biosynthesis via DXP pathway; isopentenyl diphosphate from 1-deoxy-D-xylulose 5-phosphate: step 2/6. Its function is as follows. Catalyzes the formation of 4-diphosphocytidyl-2-C-methyl-D-erythritol from CTP and 2-C-methyl-D-erythritol 4-phosphate (MEP). The polypeptide is 2-C-methyl-D-erythritol 4-phosphate cytidylyltransferase (Haemophilus ducreyi (strain 35000HP / ATCC 700724)).